An 84-amino-acid chain; its full sequence is Small ribosomal subunit protein bS16 (84 aa).

It belongs to the bacterial ribosomal protein bS16 family.

This is Small ribosomal subunit protein bS16 from Ralstonia pickettii (strain 12J).